The sequence spans 140 residues: Probable deoxyuridine 5'-triphosphate nucleotidohydrolase (140 aa).

Substrate is bound by residues 62–64 (RSG), 76–79 (GVID), arginine 130, and 135–136 (FG).

It belongs to the dUTPase family. As to quaternary structure, homotrimer. Mg(2+) is required as a cofactor.

The enzyme catalyses dUTP + H2O = dUMP + diphosphate + H(+). It functions in the pathway pyrimidine metabolism; dUMP biosynthesis; dUMP from dCTP (dUTP route): step 2/2. This enzyme is involved in nucleotide metabolism: it produces dUMP, the immediate precursor of thymidine nucleotides and it decreases the intracellular concentration of dUTP so that uracil cannot be incorporated into DNA. This chain is Probable deoxyuridine 5'-triphosphate nucleotidohydrolase, found in Schizosaccharomyces pombe (strain 972 / ATCC 24843) (Fission yeast).